The sequence spans 279 residues: Shikimate dehydrogenase (NADP(+)) (279 aa).

Residues 21-23 (SMS) and T68 contribute to the shikimate site. The active-site Proton acceptor is the K72. N93 and D108 together coordinate shikimate. NADP(+) is bound by residues 130-134 (GAGGA) and L219. Y221 lines the shikimate pocket. G242 is an NADP(+) binding site.

It belongs to the shikimate dehydrogenase family. Homodimer.

The catalysed reaction is shikimate + NADP(+) = 3-dehydroshikimate + NADPH + H(+). It participates in metabolic intermediate biosynthesis; chorismate biosynthesis; chorismate from D-erythrose 4-phosphate and phosphoenolpyruvate: step 4/7. In terms of biological role, involved in the biosynthesis of the chorismate, which leads to the biosynthesis of aromatic amino acids. Catalyzes the reversible NADPH linked reduction of 3-dehydroshikimate (DHSA) to yield shikimate (SA). This is Shikimate dehydrogenase (NADP(+)) from Oleidesulfovibrio alaskensis (strain ATCC BAA-1058 / DSM 17464 / G20) (Desulfovibrio alaskensis).